Reading from the N-terminus, the 293-residue chain is Protein Pat (293 aa).

One can recognise a BEN domain in the interval 187–287; the sequence is LPDIILNPLD…LLLRTRQDRA (101 aa).

As to quaternary structure, interacts with poc1b. In terms of tissue distribution, an mRNA and protein component of germ plasm and primordial germ cells (PGCs) throughout oogenesis and early development, being first localized to the granulo-fibrillar material (GFM) of the mitochondrial cloud in stage I and II oocytes and to the periphery of mature germinal granules both in oocytes and in embryos. Shows some somatic expression including the ectodermal cells of tailbud embryos. In adults, only expressed in ovaries.

Its subcellular location is the cytoplasm. It localises to the nucleus. Functionally, probably plays a role in germ plasm formation, positioning and maintenance. The chain is Protein Pat from Xenopus laevis (African clawed frog).